The sequence spans 1024 residues: Hemolysin, plasmid (1024 aa).

Over residues 20–32 (AANKLHSAGQSTK) the composition is skewed to polar residues. The tract at residues 20-39 (AANKLHSAGQSTKDALKKAA) is disordered. 3 consecutive transmembrane segments (helical) span residues 238–260 (IGAG…ILSN), 268–327 (KAAA…LSIA), and 365–411 (DASL…GILE). Residues Lys564 and Lys690 are each lipidated (N6-myristoyl lysine). Hemolysin-type calcium-binding repeat units lie at residues 732–749 (FGSK…DDLI), 750–767 (EGND…NDTL), 768–785 (SGGN…NDKL), 786–803 (IGVA…DDEF), 816–833 (FGGK…ADLL), and 834–851 (DGGE…NDIY).

The protein belongs to the RTX prokaryotic toxin (TC 1.C.11) family. In terms of processing, myristoylated by HlyC; the toxin only becomes active when modified. Mainly myristoylated, while a minor fraction is acylated with pentadecanoyl (C15:0; 26%) and heptadecanoyl (C17:0; 6%) fatty acyl groups. Fatty acylation is involved in binding to host membranes and promotes the irreversible insertion of Hemolysin into the host cell membrane. Can be activated by both myristoylation and palmitoylation, but HlyC catalyzes lysine myristoylation.

Its subcellular location is the secreted. The protein resides in the host cell membrane. Its function is as follows. Bacterial hemolysins are exotoxins that attack blood cell membranes and cause cell rupture by forming a pore. This chain is Hemolysin, plasmid, found in Escherichia coli.